The following is a 215-amino-acid chain: Cytochrome b6 (215 aa).

The chain crosses the membrane as a helical span at residues 32–52; the sequence is IFYCLGGITLTCFLVQVATGF. Cysteine 35 provides a ligand contact to heme c. Residues histidine 86 and histidine 100 each coordinate heme b. Helical transmembrane passes span 90–110, 116–136, and 186–206; these read ASMMVLMMILHVFRVYLTGGF, LTWVTGVVLAVLTASFGVTGY, and LHTFVLPLLTAVFMLMHFPMI. The heme b site is built by histidine 187 and histidine 202.

It belongs to the cytochrome b family. PetB subfamily. In terms of assembly, the 4 large subunits of the cytochrome b6-f complex are cytochrome b6, subunit IV (17 kDa polypeptide, PetD), cytochrome f and the Rieske protein, while the 4 small subunits are PetG, PetL, PetM and PetN. The complex functions as a dimer. Heme b serves as cofactor. Requires heme c as cofactor.

The protein resides in the plastid. It is found in the chloroplast thylakoid membrane. Its function is as follows. Component of the cytochrome b6-f complex, which mediates electron transfer between photosystem II (PSII) and photosystem I (PSI), cyclic electron flow around PSI, and state transitions. In Agrostis stolonifera (Creeping bentgrass), this protein is Cytochrome b6.